The following is a 244-amino-acid chain: Putative ABC transporter ATP-binding protein gll0289 (244 aa).

Residues 5-237 (LVVEELHYSY…RVLLETHGLE (233 aa)) form the ABC transporter domain. 38–45 (GPNGSGKS) is an ATP binding site.

The protein belongs to the ABC transporter superfamily.

The protein localises to the cell inner membrane. In terms of biological role, probably part of an ABC transporter complex. Responsible for energy coupling to the transport system. The chain is Putative ABC transporter ATP-binding protein gll0289 from Gloeobacter violaceus (strain ATCC 29082 / PCC 7421).